The primary structure comprises 367 residues: Ribosomal lysine N-methyltransferase 5 (367 aa).

S-adenosyl-L-methionine is bound by residues Trp-110, 170 to 172 (GAG), Asp-192, Trp-256, and Met-288.

Belongs to the class I-like SAM-binding methyltransferase superfamily. RKM5 family.

Functionally, S-adenosyl-L-methionine-dependent protein-lysine N-methyltransferase that monomethylates 60S ribosomal protein L1 (RPL1A and RPL1B) at 'Lys-46'. This is Ribosomal lysine N-methyltransferase 5 (RKM5) from Saccharomyces cerevisiae (strain JAY291) (Baker's yeast).